Consider the following 249-residue polypeptide: Type-1Aa cytolytic delta-endotoxin (249 aa).

It belongs to the cyt1/cyt2 endotoxin family. Active after proteolytic processing.

Functionally, kills the larvae of dipteran insects by making pores in the epithelial cell membrane of the insect midgut. Acts on mosquitos and black flies. The sequence is that of Type-1Aa cytolytic delta-endotoxin (cyt1Aa) from Bacillus thuringiensis subsp. morrisoni.